The chain runs to 256 residues: MHCYKLTIAYDGTNYSGWQIQPNASSIQQKIQEALCILLKKEKVVLVGSGRTDAGVHAKGQVAHFHFQDYIDLSRLHVSLNGLLPRDIRIKAVEPVSPRFHSQYSAIRKEYHYYLHLNKVMDPFQRLYSWHFQRKIDVNILKKAAILFTGTHDFTSFANEAHRGTAAKNPVRTLYRLDIKPNEGGLRLEFEGDGFLYKMVRNIVGTLMDVASHKRAIEEINQIFAAKNRRQASLAAPPEGLFLIQVFYENENGCLD.

Aspartate 53 acts as the Nucleophile in catalysis. Tyrosine 111 serves as a coordination point for substrate.

The protein belongs to the tRNA pseudouridine synthase TruA family. In terms of assembly, homodimer.

It carries out the reaction uridine(38/39/40) in tRNA = pseudouridine(38/39/40) in tRNA. Its function is as follows. Formation of pseudouridine at positions 38, 39 and 40 in the anticodon stem and loop of transfer RNAs. This Protochlamydia amoebophila (strain UWE25) protein is tRNA pseudouridine synthase A 1.